A 399-amino-acid polypeptide reads, in one-letter code: Large envelope protein (399 aa).

Residue methionine 1 is modified to N-acetylmethionine. The N-myristoyl glycine; by host moiety is linked to residue glycine 2. Residues 2 to 118 form a pre-S1 region; it reads GLSWTVPLEW…PPLRDTHPQA (117 aa). The interval 2–173 is pre-S; that stretch reads GLSWTVPLEW…FSRIGDPAPN (172 aa). At 2–180 the chain is on the virion surface; in external conformation side; sequence GLSWTVPLEW…APNMESITSG (179 aa). The Intravirion; in internal conformation portion of the chain corresponds to 2–252; the sequence is GLSWTVPLEW…PGYRWMCLRR (251 aa). Serine 4 carries an N-linked (GlcNAc...) asparagine glycan. A disordered region spans residues 85–110; it reads KTLPADPPPASTNRQSGRQPTPITPP. The segment covering 95–105 has biased composition (polar residues); the sequence is STNRQSGRQPT. A pre-S2 region spans residues 119 to 173; it reads MQWNSTTFHQALQDPRVRGLYFPAGGSSSGTVNPVPTTASLISSIFSRIGDPAPN. A helical membrane pass occupies residues 181–201; sequence FLGPLLVLQAGFFLLTKILTI. Residues 202–252 are Intravirion; in external conformation-facing; that stretch reads PQSLDSWWTSLNFLGGAPVCLGQNSQSPTSNHSPTSCPPICPGYRWMCLRR. The chain crosses the membrane as a helical span at residues 253 to 273; that stretch reads FIIFLFILLLCLIFLLVLLDY. Residues 274-347 lie on the Virion surface side of the membrane; it reads QGMLPVCPLI…WASARFSWLS (74 aa). The N-linked (GlcNAc...) asparagine; by host glycan is linked to asparagine 319. The chain crosses the membrane as a helical span at residues 348–368; sequence LLVPFVQWFAGLSPTVWLSVI. Residues 369–374 lie on the Intravirion side of the membrane; sequence WMMWYW. Residues 375–397 traverse the membrane as a helical segment; the sequence is GPSLYDILSPFIPLLPIFFCLWV. At 398–399 the chain is on the virion surface side; sequence YI.

It belongs to the orthohepadnavirus major surface antigen family. In terms of assembly, in its internal form (Li-HBsAg), interacts with the capsid protein and with the isoform S. Interacts with host chaperone CANX. Associates with host chaperone CANX through its pre-S2 N glycan; this association may be essential for isoform M proper secretion. As to quaternary structure, interacts with isoform L. Interacts with the antigens of satellite virus HDV (HDVAgs); this interaction is required for encapsidation of HDV genomic RNA. Isoform M is N-terminally acetylated by host at a ratio of 90%, and N-glycosylated by host at the pre-S2 region. Post-translationally, myristoylated.

The protein localises to the virion membrane. Its function is as follows. The large envelope protein exists in two topological conformations, one which is termed 'external' or Le-HBsAg and the other 'internal' or Li-HBsAg. In its external conformation the protein attaches the virus to cell receptors and thereby initiating infection. This interaction determines the species specificity and liver tropism. This attachment induces virion internalization predominantly through caveolin-mediated endocytosis. The large envelope protein also assures fusion between virion membrane and endosomal membrane. In its internal conformation the protein plays a role in virion morphogenesis and mediates the contact with the nucleocapsid like a matrix protein. The middle envelope protein plays an important role in the budding of the virion. It is involved in the induction of budding in a nucleocapsid independent way. In this process the majority of envelope proteins bud to form subviral lipoprotein particles of 22 nm of diameter that do not contain a nucleocapsid. This Homo sapiens (Human) protein is Large envelope protein.